Consider the following 234-residue polypeptide: Heme-copper oxidase subunit 2 (234 aa).

Helical transmembrane passes span leucine 13–isoleucine 33 and leucine 72–leucine 92. Residues histidine 151, cysteine 188, cysteine 192, and histidine 196 each contribute to the Cu cation site.

This sequence belongs to the cytochrome c oxidase subunit 2 family.

It localises to the cell membrane. This chain is Heme-copper oxidase subunit 2 (aoxA), found in Aeropyrum pernix (strain ATCC 700893 / DSM 11879 / JCM 9820 / NBRC 100138 / K1).